Consider the following 211-residue polypeptide: Histone H1t (211 aa).

Ala-1 is modified (N-acetylalanine). Low complexity predominate over residues 1 to 16 (AETAPAAPADSVPASV). Positions 1–42 (AETAPAAPADSVPASVEKPPAKKRGKKPVGLTGTSRKAPSAS) are disordered. Over residues 32–42 (TGTSRKAPSAS) the composition is skewed to polar residues. Residues 39–112 (PSASVSKLIT…GASGSFKLSK (74 aa)) form the H15 domain. Citrulline is present on Arg-57. A disordered region spans residues 101 to 211 (GTGASGSFKL…TNPRKATNRK (111 aa)). Basic residues predominate over residues 121 to 135 (GKVKKPAAAKTKKLV). A Phosphoserine modification is found at Ser-142. A compositionally biased stretch (basic residues) spans 147–156 (KANKRAKKSR). The residue at position 158 (Thr-158) is a Phosphothreonine. 2 positions are modified to phosphoserine: Ser-166 and Ser-181. Positions 176–189 (KQQRKSPAKARAAK) are enriched in basic residues.

It belongs to the histone H1/H5 family. Phosphorylated in early spermatids. In terms of processing, citrullination at Arg-57 (H1R54ci) by PADI4 takes place within the DNA-binding site of H1 and results in its displacement from chromatin and global chromatin decondensation, thereby promoting pluripotency and stem cell maintenance. In terms of tissue distribution, testis-specific.

It is found in the nucleus. It localises to the chromosome. Functionally, testis-specific histone H1 that forms less compacted chromatin compared to other H1 histone subtypes. Formation of more relaxed chromatin may be required to promote chromatin architecture required for proper chromosome regulation during meiosis, such as homologous recombination. Histones H1 act as linkers that bind to nucleosomes and compact polynucleosomes into a higher-order chromatin configuration. This is Histone H1t from Sus scrofa (Pig).